The primary structure comprises 88 residues: MDQLNVKEQQDFQQIVEQKQMKDFMRLYSNLVSKCFDDCVNDFTSNNLTTKETGCITKCSEKFLKHSERVGQRFQEQNALLMQNMQKR.

The Twin CX3C motif motif lies at 35 to 59; the sequence is CFDDCVNDFTSNNLTTKETGCITKC. Disulfide bonds link Cys35-Cys59 and Cys39-Cys55.

Belongs to the small Tim family. Heterohexamer; composed of 3 copies of TIM9 and 3 copies of TIM10, named soluble 70 kDa complex. Associates with the TIM22 complex, whose core is composed of TIM22 and TIM54. Interacts with the transmembrane regions of multi-pass transmembrane proteins in transit.

The protein localises to the mitochondrion inner membrane. Its function is as follows. Mitochondrial intermembrane chaperone that participates in the import and insertion of multi-pass transmembrane proteins into the mitochondrial inner membrane. Also required for the transfer of beta-barrel precursors from the TOM complex to the sorting and assembly machinery (SAM complex) of the outer membrane. Acts as a chaperone-like protein that protects the hydrophobic precursors from aggregation and guide them through the mitochondrial intermembrane space. This Debaryomyces hansenii (strain ATCC 36239 / CBS 767 / BCRC 21394 / JCM 1990 / NBRC 0083 / IGC 2968) (Yeast) protein is Mitochondrial import inner membrane translocase subunit TIM9 (TIM9).